Consider the following 174-residue polypeptide: Large ribosomal subunit protein uL10 (174 aa).

The protein belongs to the universal ribosomal protein uL10 family. Part of the ribosomal stalk of the 50S ribosomal subunit. The N-terminus interacts with L11 and the large rRNA to form the base of the stalk. The C-terminus forms an elongated spine to which L12 dimers bind in a sequential fashion forming a multimeric L10(L12)X complex.

In terms of biological role, forms part of the ribosomal stalk, playing a central role in the interaction of the ribosome with GTP-bound translation factors. The chain is Large ribosomal subunit protein uL10 from Methylobacillus flagellatus (strain ATCC 51484 / DSM 6875 / VKM B-1610 / KT).